The sequence spans 118 residues: MNKLAFSRELRLLTPEHYKKVFQQAHRAGSPHLTILARPNDLNHPRLGLAVPKKQIKTAPGRNHFKRIVRESFRLKQHDLPANDFVVIAKKSASELSNEELFKLLDKLWHRLSRLSRG.

This sequence belongs to the RnpA family. In terms of assembly, consists of a catalytic RNA component (M1 or rnpB) and a protein subunit.

The catalysed reaction is Endonucleolytic cleavage of RNA, removing 5'-extranucleotides from tRNA precursor.. Its function is as follows. RNaseP catalyzes the removal of the 5'-leader sequence from pre-tRNA to produce the mature 5'-terminus. It can also cleave other RNA substrates such as 4.5S RNA. The protein component plays an auxiliary but essential role in vivo by binding to the 5'-leader sequence and broadening the substrate specificity of the ribozyme. This Photobacterium profundum (strain SS9) protein is Ribonuclease P protein component.